The chain runs to 398 residues: Glutamyl-tRNA reductase (398 aa).

Substrate contacts are provided by residues 45 to 48, Ser88, 93 to 95, and Gln99; these read TCNR and EDQ. The active-site Nucleophile is the Cys46. Residue 168–173 coordinates NADP(+); it reads GAGKMG.

This sequence belongs to the glutamyl-tRNA reductase family. As to quaternary structure, homodimer.

It catalyses the reaction (S)-4-amino-5-oxopentanoate + tRNA(Glu) + NADP(+) = L-glutamyl-tRNA(Glu) + NADPH + H(+). Its pathway is porphyrin-containing compound metabolism; protoporphyrin-IX biosynthesis; 5-aminolevulinate from L-glutamyl-tRNA(Glu): step 1/2. In terms of biological role, catalyzes the NADPH-dependent reduction of glutamyl-tRNA(Glu) to glutamate 1-semialdehyde (GSA). The polypeptide is Glutamyl-tRNA reductase (hemA) (Methanothermobacter marburgensis (strain ATCC BAA-927 / DSM 2133 / JCM 14651 / NBRC 100331 / OCM 82 / Marburg) (Methanobacterium thermoautotrophicum)).